The primary structure comprises 1293 residues: Phosphoribosylformylglycinamidine synthase (1293 aa).

Residues 305–316, 384–386, and Ala676 each bind ATP; these read GAATGSGGEIRD and TGY. The disordered stretch occupies residues 307-326; sequence ATGSGGEIRDEGATGRGSKP. Mg(2+) is bound by residues Asp677, Glu716, Asn720, and Asp884. Residue Ser886 participates in ATP binding. Residues 1040–1293 form the Glutamine amidotransferase type-1 domain; the sequence is MAILREQGVN…MFRNARVKIG (254 aa). The active-site Nucleophile is the Cys1133. Residues His1258 and Glu1260 contribute to the active site.

In the N-terminal section; belongs to the FGAMS family. As to quaternary structure, monomer.

The protein localises to the cytoplasm. It catalyses the reaction N(2)-formyl-N(1)-(5-phospho-beta-D-ribosyl)glycinamide + L-glutamine + ATP + H2O = 2-formamido-N(1)-(5-O-phospho-beta-D-ribosyl)acetamidine + L-glutamate + ADP + phosphate + H(+). The protein operates within purine metabolism; IMP biosynthesis via de novo pathway; 5-amino-1-(5-phospho-D-ribosyl)imidazole from N(2)-formyl-N(1)-(5-phospho-D-ribosyl)glycinamide: step 1/2. Functionally, phosphoribosylformylglycinamidine synthase involved in the purines biosynthetic pathway. Catalyzes the ATP-dependent conversion of formylglycinamide ribonucleotide (FGAR) and glutamine to yield formylglycinamidine ribonucleotide (FGAM) and glutamate. The chain is Phosphoribosylformylglycinamidine synthase from Shewanella frigidimarina (strain NCIMB 400).